Reading from the N-terminus, the 1227-residue chain is DNA-directed RNA polymerase subunit beta (1227 aa).

It belongs to the RNA polymerase beta chain family. The RNAP catalytic core consists of 2 alpha, 1 beta, 1 beta' and 1 omega subunit. When a sigma factor is associated with the core the holoenzyme is formed, which can initiate transcription.

The enzyme catalyses RNA(n) + a ribonucleoside 5'-triphosphate = RNA(n+1) + diphosphate. Functionally, DNA-dependent RNA polymerase catalyzes the transcription of DNA into RNA using the four ribonucleoside triphosphates as substrates. The protein is DNA-directed RNA polymerase subunit beta of Chloroflexus aurantiacus (strain ATCC 29366 / DSM 635 / J-10-fl).